Reading from the N-terminus, the 344-residue chain is Alkyl hydroperoxide reductase Rv2159c (344 aa).

The interval 49 to 50 is important for interaction with PknI; sequence AG. The Cysteine sulfenic acid (-SOH) intermediate role is filled by cysteine 84.

The protein belongs to the AhpD family. In terms of assembly, interacts with the serine/threonine-protein kinase PknI. The PknI-Rv2159c interaction is mediated through phosphorylation independent physical interaction.

Interaction with PknI increases the peroxidase activity by several folds. Its function is as follows. Involved in protection against oxidative stresses. May play a significant role in maintaining the cellular homeostasis during stress and virulence of M.tuberculosis. In vitro, catalyzes the decomposition of cumene hydroperoxide (CHP) to acetophenone. This is Alkyl hydroperoxide reductase Rv2159c from Mycobacterium tuberculosis (strain ATCC 25618 / H37Rv).